The chain runs to 452 residues: Friend leukemia integration 1 transcription factor (452 aa).

Phosphoserine is present on S39. The PNT domain maps to 112–198 (PPPPNMTTNE…SHLTYLRESS (87 aa)). Polar residues predominate over residues 202-214 (YNTTSHTDPSSRL). The tract at residues 202–272 (YNTTSHTDPS…YQILGPTSSR (71 aa)) is disordered. A compositionally biased stretch (basic and acidic residues) spans 215-226 (NVKEDPSYDSVR). Polar residues predominate over residues 248–257 (QTMSKNTEQR). Residues 281-361 (IQLWQFLLEL…HGKRYAYKFD (81 aa)) constitute a DNA-binding region (ETS).

The protein belongs to the ETS family. As to quaternary structure, can form homodimers or heterodimers with ETV6/TEL1.

Its subcellular location is the nucleus. Functionally, sequence-specific transcriptional activator. Recognizes the DNA sequence 5'-C[CA]GGAAGT-3'. The chain is Friend leukemia integration 1 transcription factor (FLI1) from Bos taurus (Bovine).